The primary structure comprises 143 residues: Insulin-like growth factor 1 (143 aa).

The first 32 residues, 1–32 (MITPTVKMRILSSSHLFYLALCLLTFTSSATA), serve as a signal peptide directing secretion. The tract at residues 33–61 (GPETLCGAELVDALQFVCGDRGFYFNKPT) is b. 3 cysteine pairs are disulfide-bonded: C38-C80, C50-C93, and C79-C84. Positions 62-73 (GYGSSSRRAPQT) are c. Residues 74-94 (GIVDECCFRSCDLRRLEMYCA) are a. Residues 95–102 (PLKPAKAA) form a d region. Positions 99–143 (AKAARSVRAQRHTDMPKTQKYQPPSTNKKMKSQRRRKGSTFEEHK) are disordered. The propeptide at 103–143 (RSVRAQRHTDMPKTQKYQPPSTNKKMKSQRRRKGSTFEEHK) is e peptide. Residues 126–136 (KKMKSQRRRKG) show a composition bias toward basic residues.

Belongs to the insulin family. As to quaternary structure, forms a ternary complex with IGFR1 and ITGAV:ITGB3. Forms a ternary complex with IGFR1 and ITGA6:ITGB4. Forms a ternary complex with IGFBP3 and ALS.

It localises to the secreted. Its function is as follows. The insulin-like growth factors, isolated from plasma, are structurally and functionally related to insulin but have a much higher growth-promoting activity. May be a physiological regulator of [1-14C]-2-deoxy-D-glucose (2DG) transport and glycogen synthesis in osteoblasts. Stimulates glucose transport in bone-derived osteoblastic (PyMS) cells and is effective at much lower concentrations than insulin, not only regarding glycogen and DNA synthesis but also with regard to enhancing glucose uptake. May play a role in synapse maturation. Ca(2+)-dependent exocytosis of IGF1 is required for sensory perception of smell in the olfactory bulb. Acts as a ligand for IGF1R. Binds to the alpha subunit of IGF1R, leading to the activation of the intrinsic tyrosine kinase activity which autophosphorylates tyrosine residues in the beta subunit thus initiating a cascade of down-stream signaling events leading to activation of the PI3K-AKT/PKB and the Ras-MAPK pathways. Binds to integrins ITGAV:ITGB3 and ITGA6:ITGB4. Its binding to integrins and subsequent ternary complex formation with integrins and IGFR1 are essential for IGF1 signaling. Induces the phosphorylation and activation of IGFR1, MAPK3/ERK1, MAPK1/ERK2 and AKT1. As part of the MAPK/ERK signaling pathway, acts as a negative regulator of apoptosis in cardiomyocytes via promotion of STUB1/CHIP-mediated ubiquitination and degradation of ICER-type isoforms of CREM. The polypeptide is Insulin-like growth factor 1 (Oryctolagus cuniculus (Rabbit)).